Here is a 275-residue protein sequence, read N- to C-terminus: Large ribosomal subunit protein uL2 (275 aa).

2 disordered regions span residues 35–55 (EKQT…RHKG) and 223–260 (VAMN…KTRN). Over residues 39–49 (RSSGRNNQGRV) the composition is skewed to polar residues.

Belongs to the universal ribosomal protein uL2 family. As to quaternary structure, part of the 50S ribosomal subunit. Forms a bridge to the 30S subunit in the 70S ribosome.

In terms of biological role, one of the primary rRNA binding proteins. Required for association of the 30S and 50S subunits to form the 70S ribosome, for tRNA binding and peptide bond formation. It has been suggested to have peptidyltransferase activity; this is somewhat controversial. Makes several contacts with the 16S rRNA in the 70S ribosome. The sequence is that of Large ribosomal subunit protein uL2 from Methylococcus capsulatus (strain ATCC 33009 / NCIMB 11132 / Bath).